The sequence spans 670 residues: Acetyl-coenzyme A synthetase (670 aa).

Residues 205–208 (RRGK) and T326 each bind CoA. ATP is bound by residues 402 to 404 (GEP), 426 to 431 (STWWMT), D517, R532, and R543. Mg(2+) contacts are provided by V554, H556, and V559. Position 601 (R601) interacts with CoA. K626 bears the N6-acetyllysine mark.

This sequence belongs to the ATP-dependent AMP-binding enzyme family. Mg(2+) serves as cofactor. In terms of processing, acetylated. Deacetylation by the SIR2-homolog deacetylase activates the enzyme.

It carries out the reaction acetate + ATP + CoA = acetyl-CoA + AMP + diphosphate. In terms of biological role, catalyzes the conversion of acetate into acetyl-CoA (AcCoA), an essential intermediate at the junction of anabolic and catabolic pathways. AcsA undergoes a two-step reaction. In the first half reaction, AcsA combines acetate with ATP to form acetyl-adenylate (AcAMP) intermediate. In the second half reaction, it can then transfer the acetyl group from AcAMP to the sulfhydryl group of CoA, forming the product AcCoA. This is Acetyl-coenzyme A synthetase from Pyrobaculum arsenaticum (strain DSM 13514 / JCM 11321 / PZ6).